A 307-amino-acid polypeptide reads, in one-letter code: GTPase Era (307 aa).

Residues Arg17–Glu186 enclose the Era-type G domain. The G1 stretch occupies residues Gly25–Ser32. A GTP-binding site is contributed by Gly25 to Ser32. The tract at residues Gln51–Asn55 is G2. The G3 stretch occupies residues Asp72–Gly75. Residues Asp72–Phe76 and Asn133–Asp136 each bind GTP. The interval Asn133–Asp136 is G4. Residues Val165 to Ala167 are G5. The KH type-2 domain maps to Leu217–Ser293.

It belongs to the TRAFAC class TrmE-Era-EngA-EngB-Septin-like GTPase superfamily. Era GTPase family. As to quaternary structure, monomer.

It localises to the cytoplasm. It is found in the cell inner membrane. Functionally, an essential GTPase that binds both GDP and GTP, with rapid nucleotide exchange. Plays a role in 16S rRNA processing and 30S ribosomal subunit biogenesis and possibly also in cell cycle regulation and energy metabolism. The chain is GTPase Era from Neisseria meningitidis serogroup A / serotype 4A (strain DSM 15465 / Z2491).